Here is a 288-residue protein sequence, read N- to C-terminus: Phenazine biosynthesis-like domain-containing protein (288 aa).

The active site involves glutamate 46.

This sequence belongs to the PhzF family. In terms of assembly, interacts with UNRIP/MAWD.

The chain is Phenazine biosynthesis-like domain-containing protein (Pbld) from Rattus norvegicus (Rat).